Consider the following 309-residue polypeptide: MDESAKTLPPPCLCFCSEKGEDMKVGYDPITPQKEEGAWFGICRDGRLLAATLLLALLSSSFTAMSLYQLAALQADLMNLRMELQSYRGSATPAAAGAPELTAGVKLLTPAAPRPHNSSRGHRNRRAFQGPEETEQDVDLSAPPAPCLPGCRHSQHDDNGMNLRNIIQDCLQLIADSDTPTIRKGTYTFVPWLLSFKRGNALEEKENKIVVRQTGYFFIYSQVLYTDPIFAMGHVIQRKKVHVFGDELSLVTLFRCIQNMPKTLPNNSCYSAGIARLEEGDEIQLAIPRENAQISRNGDDTFFGALKLL.

Topologically, residues 1–47 are cytoplasmic; that stretch reads MDESAKTLPPPCLCFCSEKGEDMKVGYDPITPQKEEGAWFGICRDGR. The helical; Signal-anchor for type II membrane protein transmembrane segment at 48–68 threads the bilayer; it reads LLAATLLLALLSSSFTAMSLY. Topologically, residues 69 to 309 are extracellular; it reads QLAALQADLM…DTFFGALKLL (241 aa). The interval 110–140 is disordered; it reads PAAPRPHNSSRGHRNRRAFQGPEETEQDVDL. N-linked (GlcNAc...) asparagine glycans are attached at residues Asn-117 and Asn-266. Over residues 117 to 126 the composition is skewed to basic residues; the sequence is NSSRGHRNRR. The 140-residue stretch at 169-308 folds into the THD domain; sequence DCLQLIADSD…DDTFFGALKL (140 aa). A disulfide bridge links Cys-256 with Cys-269.

It belongs to the tumor necrosis factor family. In terms of assembly, homotrimer. Isoform 2 heteromultimerizes with isoform 1, probably limiting the amount of functional isoform 1 on the cell surface. In terms of processing, the soluble form derives from the membrane form by proteolytic processing. Isoform 2 is not efficiently shed from the membrane unlike isoform 1. In terms of tissue distribution, isoform 2 is expressed in many myeloid cell lines.

It is found in the cell membrane. The protein resides in the secreted. In terms of biological role, cytokine that binds to TNFRSF13B/TACI and TNFRSF17/BCMA. TNFSF13/APRIL binds to the same 2 receptors. Together, they form a 2 ligands -2 receptors pathway involved in the stimulation of B- and T-cell function and the regulation of humoral immunity. A third B-cell specific BAFF-receptor (BAFFR/BR3) promotes the survival of mature B-cells and the B-cell response. Its function is as follows. Isoform 2 seems to inhibit isoform 1 secretion and bioactivity. This chain is Tumor necrosis factor ligand superfamily member 13B (Tnfsf13b), found in Mus musculus (Mouse).